The primary structure comprises 441 residues: Vacuolar cation/proton exchanger 5 (441 aa).

Gly2 carries the N-myristoyl glycine lipid modification. At 2–69 the chain is on the cytoplasmic side; it reads GCCKVPALIQ…PNNSVLQSFK (68 aa). S-palmitoyl cysteine attachment occurs at residues Cys3 and Cys4. The helical transmembrane segment at 70 to 90 threads the bilayer; the sequence is IVILSNKLNLLLPFGPLAILL. Residues 91 to 97 lie on the Extracellular side of the membrane; that stretch reads HYLTDNK. Residues 98–118 form a helical membrane-spanning segment; sequence GWIFLLSLVGITPLAERLGYA. Over 119–129 the chain is Cytoplasmic; it reads TEQLACYTGST. Residues 130–150 traverse the membrane as a helical segment; that stretch reads VGGLLNATFGNVTELIISIFA. A cation selection region spans residues 139-174; that stretch reads GNVTELIISIFALKSGMIRVVQLTLLGSILSNMLLV. Residues 151 to 165 lie on the Extracellular side of the membrane; it reads LKSGMIRVVQLTLLG. The helical transmembrane segment at 166–186 threads the bilayer; it reads SILSNMLLVLGCAFFCGGLVF. At 187-197 the chain is on the cytoplasmic side; that stretch reads SQKEQVFDKGN. A helical transmembrane segment spans residues 198–218; the sequence is AVVNSGLLLMAVMGLLFPAVL. Topologically, residues 219 to 231 are extracellular; that stretch reads HYTHSEVHAGSSE. Residues 232 to 252 form a helical membrane-spanning segment; sequence LALSRFSSCIMLVAYAAYLFF. Residues 253-286 lie on the Cytoplasmic side of the membrane; that stretch reads QLKSQPSSYTPLTEETNQNEETSDDDEDPEISKW. Residues 287–307 form a helical membrane-spanning segment; that stretch reads EAIIWLSILTAWVSLLSGYLV. Topologically, residues 308-311 are extracellular; that stretch reads DAIE. Residues 312 to 332 form a helical membrane-spanning segment; that stretch reads GASVSWKIPISFISVILLPIV. The Cytoplasmic segment spans residues 333–354; that stretch reads GNAAEHAGAIMFAMKDKLDLSL. The interval 333 to 368 is cation selection; sequence GNAAEHAGAIMFAMKDKLDLSLGVAIGSSIQISMFA. A helical membrane pass occupies residues 355-375; it reads GVAIGSSIQISMFAVPFCVVI. At 376–384 the chain is on the extracellular side; it reads GWMMGAQMD. Residues 385 to 405 traverse the membrane as a helical segment; the sequence is LNFQLFETATLFITVIVVAFF. Residues 406–412 lie on the Cytoplasmic side of the membrane; sequence LQEGTSN. Residues 413-433 traverse the membrane as a helical segment; the sequence is YFKGLMLILCYLIVAASFFVH. The Extracellular portion of the chain corresponds to 434–441; the sequence is EDPHQDDI.

It belongs to the Ca(2+):cation antiporter (CaCA) (TC 2.A.19) family. Cation/proton exchanger (CAX) subfamily.

It localises to the vacuole membrane. In terms of biological role, vacuolar cation/proton exchanger (CAX). Translocates Ca(2+) and other metal ions into vacuoles using the proton gradient formed by H(+)-ATPase and H(+)-pyrophosphatase. The chain is Vacuolar cation/proton exchanger 5 (CAX5) from Arabidopsis thaliana (Mouse-ear cress).